Consider the following 143-residue polypeptide: Large-conductance mechanosensitive channel (143 aa).

Helical transmembrane passes span 19 to 39 and 81 to 101; these read VGVIIGAAFGAIVTSMVGDLI and GSFLTITLNFLIVAGVLFGVI.

It belongs to the MscL family. As to quaternary structure, homopentamer.

Its subcellular location is the cell inner membrane. In terms of biological role, channel that opens in response to stretch forces in the membrane lipid bilayer. May participate in the regulation of osmotic pressure changes within the cell. This is Large-conductance mechanosensitive channel from Rhodopseudomonas palustris (strain BisB5).